Reading from the N-terminus, the 210-residue chain is Large ribosomal subunit protein uL3 (210 aa).

The interval 119–143 is disordered; sequence GYQGNIKKDGQSRGPMAHGSRYHRR.

This sequence belongs to the universal ribosomal protein uL3 family. In terms of assembly, part of the 50S ribosomal subunit. Forms a cluster with proteins L14 and L19.

Its function is as follows. One of the primary rRNA binding proteins, it binds directly near the 3'-end of the 23S rRNA, where it nucleates assembly of the 50S subunit. The sequence is that of Large ribosomal subunit protein uL3 from Lacticaseibacillus casei (strain BL23) (Lactobacillus casei).